A 350-amino-acid chain; its full sequence is Vancomycin C-type resistance protein VanC2 (350 aa).

Catalysis depends on residues Glu14 and Ser187. The ATP-grasp domain maps to 141-343 (HQAAAAIGVQ…YQELLQKLLV (203 aa)). 171 to 226 (IQTHGFPVFFKPNEAGSSKGITKVTCVEEIASALKEAFTYCSAVLLQKNIAGVEIG) provides a ligand contact to ATP. Mg(2+) is bound by residues Asp297, Glu310, and Asn312. Mn(2+) contacts are provided by Asp297, Glu310, and Asn312. Ser321 is a catalytic residue.

This sequence belongs to the D-alanine--D-alanine ligase family. As to quaternary structure, homodimer. Mg(2+) is required as a cofactor. Requires Mn(2+) as cofactor.

The protein localises to the cell membrane. It carries out the reaction D-serine + D-alanine + ATP = D-alanyl-D-serine + ADP + phosphate + H(+). The protein operates within cell wall biogenesis; peptidoglycan biosynthesis. Inhibited by D-cycloserine. Required for low-level resistance to the glycopeptide antibiotic vancomycin. D-alanine--D-alanine ligase of altered specificity, which catalyzes synthesis of D-Ala-D-Ser; produces a peptidoglycan which does not terminate in D-alanine but in D-serine, thus probably reducing affinity for vancomycin. Only insignificant catalytic synthesis of D-Ala-D-Ala in vitro. This chain is Vancomycin C-type resistance protein VanC2, found in Enterococcus casseliflavus (Enterococcus flavescens).